Reading from the N-terminus, the 574-residue chain is Ankyrin repeat protein B19 (574 aa).

6 ANK repeats span residues 56–87 (TGYT…DVTM), 135–164 (IKSR…DPNF), 167–213 (DGYT…NLNA), 217–249 (CGNT…NFEI), 253–285 (HGLT…NVGE), and 327–356 (EGKT…DINA). The 34-residue stretch at 541-574 (NCLLTLLPSEIIYEILYMLTINDLYNISYPPTKV) folds into the F-box domain.

The protein belongs to the poxvirinae B18 protein family.

This is Ankyrin repeat protein B19 from Vaccinia virus (strain Western Reserve) (VACV).